Consider the following 139-residue polypeptide: Phosphoribosyl-AMP cyclohydrolase (139 aa).

Asp-92 contacts Mg(2+). Zn(2+) is bound at residue Cys-93. Mg(2+) contacts are provided by Asp-94 and Asp-96. Residues Cys-111 and Cys-118 each contribute to the Zn(2+) site.

The protein belongs to the PRA-CH family. Homodimer. Requires Mg(2+) as cofactor. Zn(2+) is required as a cofactor.

The protein localises to the cytoplasm. The enzyme catalyses 1-(5-phospho-beta-D-ribosyl)-5'-AMP + H2O = 1-(5-phospho-beta-D-ribosyl)-5-[(5-phospho-beta-D-ribosylamino)methylideneamino]imidazole-4-carboxamide. It functions in the pathway amino-acid biosynthesis; L-histidine biosynthesis; L-histidine from 5-phospho-alpha-D-ribose 1-diphosphate: step 3/9. Functionally, catalyzes the hydrolysis of the adenine ring of phosphoribosyl-AMP. The chain is Phosphoribosyl-AMP cyclohydrolase from Caulobacter vibrioides (strain ATCC 19089 / CIP 103742 / CB 15) (Caulobacter crescentus).